A 96-amino-acid chain; its full sequence is Co-chaperonin GroES (96 aa).

The protein belongs to the GroES chaperonin family. As to quaternary structure, heptamer of 7 subunits arranged in a ring. Interacts with the chaperonin GroEL.

It localises to the cytoplasm. Its function is as follows. Together with the chaperonin GroEL, plays an essential role in assisting protein folding. The GroEL-GroES system forms a nano-cage that allows encapsulation of the non-native substrate proteins and provides a physical environment optimized to promote and accelerate protein folding. GroES binds to the apical surface of the GroEL ring, thereby capping the opening of the GroEL channel. The sequence is that of Co-chaperonin GroES from Streptococcus pyogenes serotype M18 (strain MGAS8232).